We begin with the raw amino-acid sequence, 328 residues long: Methionyl-tRNA formyltransferase (328 aa).

121–124 (SLLP) contributes to the (6S)-5,6,7,8-tetrahydrofolate binding site.

The protein belongs to the Fmt family.

It catalyses the reaction L-methionyl-tRNA(fMet) + (6R)-10-formyltetrahydrofolate = N-formyl-L-methionyl-tRNA(fMet) + (6S)-5,6,7,8-tetrahydrofolate + H(+). Attaches a formyl group to the free amino group of methionyl-tRNA(fMet). The formyl group appears to play a dual role in the initiator identity of N-formylmethionyl-tRNA by promoting its recognition by IF2 and preventing the misappropriation of this tRNA by the elongation apparatus. The protein is Methionyl-tRNA formyltransferase of Paraburkholderia xenovorans (strain LB400).